Reading from the N-terminus, the 139-residue chain is Nucleoside diphosphate kinase (139 aa).

Positions 10, 58, 86, 92, 104, and 114 each coordinate ATP. The active-site Pros-phosphohistidine intermediate is the histidine 117.

Belongs to the NDK family. As to quaternary structure, homotetramer. Mg(2+) is required as a cofactor.

The protein resides in the cytoplasm. It catalyses the reaction a 2'-deoxyribonucleoside 5'-diphosphate + ATP = a 2'-deoxyribonucleoside 5'-triphosphate + ADP. The enzyme catalyses a ribonucleoside 5'-diphosphate + ATP = a ribonucleoside 5'-triphosphate + ADP. In terms of biological role, major role in the synthesis of nucleoside triphosphates other than ATP. The ATP gamma phosphate is transferred to the NDP beta phosphate via a ping-pong mechanism, using a phosphorylated active-site intermediate. The protein is Nucleoside diphosphate kinase of Rhodococcus opacus (strain B4).